The sequence spans 60 residues: Waprin-Lio1 (60 aa).

Residues Met1–Ala8 form the signal peptide. The WAP domain occupies Gln9–Arg59. Cystine bridges form between Cys16–Cys46, Cys29–Cys50, Cys33–Cys45, and Cys39–Cys55.

The protein belongs to the venom waprin family. As to expression, expressed by the venom gland.

The protein resides in the secreted. Functionally, damages membranes of susceptible bacteria. Has no hemolytic activity. Not toxic to mice. Does not inhibit the proteinases elastase and cathepsin G. This is Waprin-Lio1 from Erythrolamprus poecilogyrus (Water snake).